The chain runs to 262 residues: Hydroxyethylthiazole kinase (262 aa).

M43 serves as a coordination point for substrate. Residues R118 and T164 each contribute to the ATP site. A substrate-binding site is contributed by A191.

It belongs to the Thz kinase family. Mg(2+) serves as cofactor.

The catalysed reaction is 5-(2-hydroxyethyl)-4-methylthiazole + ATP = 4-methyl-5-(2-phosphooxyethyl)-thiazole + ADP + H(+). The protein operates within cofactor biosynthesis; thiamine diphosphate biosynthesis; 4-methyl-5-(2-phosphoethyl)-thiazole from 5-(2-hydroxyethyl)-4-methylthiazole: step 1/1. Its function is as follows. Catalyzes the phosphorylation of the hydroxyl group of 4-methyl-5-beta-hydroxyethylthiazole (THZ). The protein is Hydroxyethylthiazole kinase of Cereibacter sphaeroides (strain KD131 / KCTC 12085) (Rhodobacter sphaeroides).